A 335-amino-acid chain; its full sequence is MKTLGQFIVEKQAEYPNAKGELSGILSSLRLVAKIIHRDINKAGLTNNIIGNSGVENVQGETQMKLDLFAHNTMKQALITREEVAGFASEEEENFVAFDTERGRNAKYVILTDPLDGSSNIDVNVAVGTIFSIYRRVSPIGTPVTLEDFLQPGHKQVAAGYIVYGSSTMLVYTTGNGVNGFTYDPSLGVFCLSHENIQIPPNGKIYSINEGQYLKFPMGVKKYIKYCQEKDKSTDRPYTSRYIGSLVSDFHRNMLKGGIYIYPSATTYPKGKLRLLYEGNPMAFLAEQAGGIASDGKDRILDIQPKELHERVPLFVGSREMVRKAEEFMREFSEE.

Mg(2+)-binding residues include E90, D113, L115, and D116. Substrate is bound by residues 116-119 (DGSS), N209, Y242, and K272. Residue E278 coordinates Mg(2+).

The protein belongs to the FBPase class 1 family. As to quaternary structure, homotetramer. Mg(2+) is required as a cofactor.

The protein localises to the cytoplasm. The catalysed reaction is beta-D-fructose 1,6-bisphosphate + H2O = beta-D-fructose 6-phosphate + phosphate. It functions in the pathway carbohydrate biosynthesis; gluconeogenesis. The polypeptide is Fructose-1,6-bisphosphatase class 1 (Histophilus somni (strain 2336) (Haemophilus somnus)).